The sequence spans 1102 residues: Coiled-coil domain-containing protein AGAP005037 (1102 aa).

Residues 1 to 11 (MLIRWKSKDKS) are compositionally biased toward basic and acidic residues. Disordered stretches follow at residues 1–69 (MLIR…HTLG) and 295–318 (HKSK…RGMY). Low complexity predominate over residues 12–21 (SSSTSSSSST). A compositionally biased stretch (basic and acidic residues) spans 50 to 65 (IDDRRRSARSREDPRR). Residues 405–430 (HRIRVEHMERQLANLTGLVQKALTQN) are a coiled coil. Disordered regions lie at residues 450-475 (RNAE…STCH) and 489-539 (DIQG…PLVM). Coiled coils occupy residues 554–579 (EVYN…LRRL) and 614–654 (DKER…EVIN). Disordered regions lie at residues 745-774 (LPIP…PSPR), 832-958 (TKIS…CSDN), and 1031-1087 (LCGG…TLPP). Positions 832 to 849 (TKISQSQLYPSEPVSSNV) are enriched in polar residues. Residues 867–881 (PPQPTRPTTGKPPVP) show a composition bias toward pro residues. Low complexity predominate over residues 904–918 (TSSRSPLASPTSPHV). Residues 936-958 (DCEQQQRTSEGTDSGSESVCSDN) show a composition bias toward polar residues.

This is Coiled-coil domain-containing protein AGAP005037 from Anopheles gambiae (African malaria mosquito).